The sequence spans 137 residues: Protein LTO1 homolog (137 aa).

Ala-2 is subject to N-acetylalanine. Ser-4 carries the post-translational modification Phosphoserine. Residues 22 to 58 (GYREGYEEGSSLGVMEGRQHGTLHGAKIGSEIGCYQG) are deca-GX3 motif; required for interaction with YAE1 and the CIA complex.

This sequence belongs to the LTO1 family. In terms of assembly, forms a complex with YAE1. Interacts with PYCR1 and PYCR2. As to expression, widely expressed. Highly expressed in placenta, kidney and skeletal muscle.

The protein resides in the nucleus. Functionally, the complex LTO1:YAE1 functions as a target specific adapter that probably recruits apo-ABCE1 to the cytosolic iron-sulfur protein assembly (CIA) complex machinery. May be required for biogenesis of the large ribosomal subunit and initiation of translation. May play a role in the regulation of proline metabolism and ROS production. This chain is Protein LTO1 homolog, found in Homo sapiens (Human).